Consider the following 152-residue polypeptide: Clitocypin-4/-3 (152 aa).

This sequence belongs to the protease inhibitor I48 family. As to quaternary structure, homodimer.

Its function is as follows. Binds and inhibits cysteine proteinases. Inhibits most strongly papain and cathepsin L, more weakly bromelain and cathepsin B while it is completely ineffective against cathepsin H. This chain is Clitocypin-4/-3 (clt4), found in Clitocybe nebularis (Clouded agaric).